A 229-amino-acid chain; its full sequence is Potassium/proton antiporter CemA (229 aa).

Transmembrane regions (helical) follow at residues 11–31 (TTPFLYLASIVFLPWWISLFF), 118–138 (IISFVILSVCSILGNEELVIL), 158–178 (LLALTDFLFGFHTISAWELLI), and 190–210 (LLVCLFPSVLHTIYYFWTFNY).

Belongs to the CemA family.

The protein resides in the plastid. The protein localises to the chloroplast inner membrane. It carries out the reaction K(+)(in) + H(+)(out) = K(+)(out) + H(+)(in). Functionally, contributes to K(+)/H(+) antiport activity by supporting proton efflux to control proton extrusion and homeostasis in chloroplasts in a light-dependent manner to modulate photosynthesis. Prevents excessive induction of non-photochemical quenching (NPQ) under continuous-light conditions. Indirectly promotes efficient inorganic carbon uptake into chloroplasts. The chain is Potassium/proton antiporter CemA from Pelargonium hortorum (Common geranium).